The chain runs to 340 residues: Phosphoribosylformylglycinamidine cyclo-ligase (340 aa).

The protein belongs to the AIR synthase family.

The protein resides in the cytoplasm. The enzyme catalyses 2-formamido-N(1)-(5-O-phospho-beta-D-ribosyl)acetamidine + ATP = 5-amino-1-(5-phospho-beta-D-ribosyl)imidazole + ADP + phosphate + H(+). It functions in the pathway purine metabolism; IMP biosynthesis via de novo pathway; 5-amino-1-(5-phospho-D-ribosyl)imidazole from N(2)-formyl-N(1)-(5-phospho-D-ribosyl)glycinamide: step 2/2. This chain is Phosphoribosylformylglycinamidine cyclo-ligase, found in Streptococcus pyogenes serotype M28 (strain MGAS6180).